The following is a 296-amino-acid chain: Formamidopyrimidine-DNA glycosylase (296 aa).

Pro2 (schiff-base intermediate with DNA) is an active-site residue. The Proton donor role is filled by Glu3. Residue Lys58 is the Proton donor; for beta-elimination activity of the active site. DNA contacts are provided by His106, Arg125, and Lys167. The segment at 258-294 adopts an FPG-type zinc-finger fold; sequence RVYDRVGLPCSRPGCAGAITRIVQANRSTFFCATCQP. Arg284 functions as the Proton donor; for delta-elimination activity in the catalytic mechanism.

This sequence belongs to the FPG family. Monomer. Zn(2+) is required as a cofactor.

It carries out the reaction Hydrolysis of DNA containing ring-opened 7-methylguanine residues, releasing 2,6-diamino-4-hydroxy-5-(N-methyl)formamidopyrimidine.. It catalyses the reaction 2'-deoxyribonucleotide-(2'-deoxyribose 5'-phosphate)-2'-deoxyribonucleotide-DNA = a 3'-end 2'-deoxyribonucleotide-(2,3-dehydro-2,3-deoxyribose 5'-phosphate)-DNA + a 5'-end 5'-phospho-2'-deoxyribonucleoside-DNA + H(+). Its function is as follows. Involved in base excision repair of DNA damaged by oxidation or by mutagenic agents. Acts as a DNA glycosylase that recognizes and removes damaged bases. Has a preference for oxidized purines, such as 7,8-dihydro-8-oxoguanine (8-oxoG). Has AP (apurinic/apyrimidinic) lyase activity and introduces nicks in the DNA strand. Cleaves the DNA backbone by beta-delta elimination to generate a single-strand break at the site of the removed base with both 3'- and 5'-phosphates. The polypeptide is Formamidopyrimidine-DNA glycosylase (Methylobacterium radiotolerans (strain ATCC 27329 / DSM 1819 / JCM 2831 / NBRC 15690 / NCIMB 10815 / 0-1)).